The primary structure comprises 457 residues: Transcription factor E2F3 (457 aa).

The interval 80-171 (LLPSVPGTEP…PKSPSEKTRY (92 aa)) is disordered. Residues 93–102 (SLYTTPQGPS) show a composition bias toward polar residues. The cyclin A/CDK2 binding stretch occupies residues 96–145 (TTPQGPSSRVGLLQQPPAPGRGGGGGPPAKRRLELGESGHQYLSDGLKTP). Residues 147 to 237 (GKGRAALRSP…KNNVQWMGCS (91 aa)) mediate DNA binding. The segment covering 155 to 164 (SPDSPKTPKS) has biased composition (low complexity). The segment at 196–217 (LNKAAEVLKVQKRRIYDITNVL) is leucine-zipper. Positions 201–237 (EVLKVQKRRIYDITNVLEGIHLIKKKSKNNVQWMGCS) match the DEF box motif. Residues 238–329 (LSEDGGMLAQ…VPDSIESLQI (92 aa)) form a dimerization region. The tract at residues 350–387 (HRPMKTNNQDHNGNIPKPTSKDLASNNSGHSDCSVSTA) is disordered. Residues 371-387 (DLASNNSGHSDCSVSTA) are compositionally biased toward polar residues. Residues 383–457 (SVSTANLSPL…LPLVEDFMCS (75 aa)) are transactivation. The tract at residues 424–441 (EDYLLSLGEEEGISDLFD) is retinoblastoma protein binding.

The protein belongs to the E2F/DP family. In terms of assembly, component of the DRTF1/E2F transcription factor complex. Binds cooperatively with TFDP1/Dp-1 to E2F sites. Interacts with retinoblastoma protein RB1 and related proteins (such as RBL1) that inhibit the E2F transactivation domain. Binds EAPP.

It localises to the nucleus. Its function is as follows. Transcription activator that binds DNA cooperatively with DP proteins through the E2 recognition site, 5'-TTTC[CG]CGC-3' found in the promoter region of a number of genes whose products are involved in cell cycle regulation or in DNA replication. The DRTF1/E2F complex functions in the control of cell-cycle progression from G1 to S phase. E2F3 binds specifically to RB1 in a cell-cycle dependent manner. Inhibits adipogenesis, probably through the repression of CEBPA binding to its target gene promoters. This Mus musculus (Mouse) protein is Transcription factor E2F3 (E2f3).